A 98-amino-acid polypeptide reads, in one-letter code: NADH-ubiquinone oxidoreductase chain 4L (98 aa).

The next 3 helical transmembrane spans lie at 1 to 21 (MPIIYTNIVLAFMISLLGMLI), 29 to 49 (SLLCLEGMMLSLFMMSTLMAL), and 58 to 78 (IVPIALLVFAACEAAVGLALL).

The protein belongs to the complex I subunit 4L family. As to quaternary structure, core subunit of respiratory chain NADH dehydrogenase (Complex I) which is composed of 45 different subunits.

The protein resides in the mitochondrion inner membrane. It catalyses the reaction a ubiquinone + NADH + 5 H(+)(in) = a ubiquinol + NAD(+) + 4 H(+)(out). In terms of biological role, core subunit of the mitochondrial membrane respiratory chain NADH dehydrogenase (Complex I) which catalyzes electron transfer from NADH through the respiratory chain, using ubiquinone as an electron acceptor. Part of the enzyme membrane arm which is embedded in the lipid bilayer and involved in proton translocation. This Nasalis larvatus (Proboscis monkey) protein is NADH-ubiquinone oxidoreductase chain 4L (MT-ND4L).